Here is a 177-residue protein sequence, read N- to C-terminus: Putative pre-16S rRNA nuclease (177 aa).

The disordered stretch occupies residues Met-1–Arg-20.

This sequence belongs to the YqgF nuclease family.

The protein resides in the cytoplasm. In terms of biological role, could be a nuclease involved in processing of the 5'-end of pre-16S rRNA. The protein is Putative pre-16S rRNA nuclease of Rhodococcus erythropolis (strain PR4 / NBRC 100887).